A 242-amino-acid polypeptide reads, in one-letter code: Platinum sensitivity protein 3 (242 aa).

As to quaternary structure, component of the SHU complex composed of at least CSM2, PSY3, SHU1 and SHU2.

It is found in the nucleus. Functionally, required for resistance to the DNA-damaging agents methyl methanesulfonate (MMS), cisplatin and oxaliplatin, but not to mitomycin C. Plays a role in protection against mutation accumulation. May be a component of the recombination-repair pathway. The chain is Platinum sensitivity protein 3 (PSY3) from Saccharomyces cerevisiae (strain ATCC 204508 / S288c) (Baker's yeast).